Consider the following 1863-residue polypeptide: MFSIAAINDTESTEKWEPLAPSKEAQEFHLSQTYHDGLLKLQAKDYDKARELLESILKDPIITNSKVETIANDNHLHHLRFLALKNLATVFLELGSSHYENALNCYLQAIDLDAKDSVLWNHLGTLSCSMGLLSISRWAFEQGLLCSPNNWNCMEKLLEVLIAVGDEVSCLSVANLILRHWPSHSRALHVKHCIEDTDSAPFAPKGIDKLEPQHVRLKFLGKRKVSDMNQDMDATSKKLRKRVQFKLPEASWVALLNILIGIVHPSRETVGISADIPITIELSLSTEAVMQGMKKKDHCVDSDSSNVSVKDCNIERESGGSVKEKEPVFSEEHPQERRSTRLERLRNQKPEKEGLEFDNSKDPSSDILQYLEKFVLKRGFDRESAGSFCNEESDPISEHAVVSNFVKENLENYGAYHMGHLLLEYIANKCEHVLSRETALKILELEKLTRHWGRDRKPECSLFLAELYHDFDSKRSDIPDAPSCMVEVTYHLSKIIESVSLDYAIDSTPSSRGKMFSDSSFKSFQGDEAAKEVLDYDTRSFWARYFWLSARLSILEDNKAKALEEYLRCLSLLGREGIGEAPVLIQRPHCRRVRELTINRIIHEINLLKIDFLLENNIPEMMEKEFYSECVNLLAPLLFPDKDILPAYAVKTEEGISSVELSALEVLIKACQKSKPIDVEVYMNCHRRKLQVLLDSTGTGESVVTPKTSSKNSSESWDHLVAEEVKAILLCISQVKNSLDQSGNSDDMVAPRDCVAGIQALLLRVMSNIVRHFFSKRYSDSQNADGIEEEKKSCFLDAAIGFCKLQHLDATISTKYQVELIIRLHDLLAEYGLCCAGKNCAGEEGAFLRFAIKHLLAVDMKVKSSINSPDGLGHDMGLPDKLCRNEVKSFLEEVHVEKNENNKTESKKDGSEEQVGYREKEQSEQQSKQIPEHTEEVAEEEKDELELLINNALDQCFFCLYGLNLRVDGSYEDELAVHKNTSRGDYQTKEQCVDVFQYILPYAKASSRTGLVKLRRVLRAIKKHFSQPPDDLLIGNVIDKFLDDPELCEDKLSYEAGSEGFLETITKCLIPSRTLSEYKISLLHSSDPYLDVYRNLYFLLAQSEEVSASDKWPGFVLTKEGEEFEQQNTNLFKYDLLYNPLRFESWEKLGNIYDEEVDLLLNDGSKHINVVGWRKNSALSQRVETSRRRSRRCLLMSLALANSPDQQSEIHELLALVYYDSLQSVVPFYDQRSVLPSKDATWTRFCENSMKHFNKAFSHRQDWSHAFYMGKLSEKLGHSYEISLSYYKQAMTLNPSAVDPVYRMHASRLKLLNACGKQNLEALKVLASYCFDESIKDTAMTIIGTTTFGSSRTLEEAQDGNLEACYAKSGEGSIQMEGVWHMLYNDSLSALGICVEGDLKHFHKARYMLAQGLYRRGGSSDLQRAKEELSFCFKSSRSSFTINMWEIDGMVKKGRRKTPGLAGNKKALEVNLPESSRKFITCIRKYLLFYLRLLEETEDVNTLERAFNSLRSDKRFSLCVEDLVPVAIGRYVKALVSSMSRVESAGAIINPDSQLEKIFSLFIEQGSIWPDICNFPETRGPETSESSLYRYLHQYIVSLELDNKVETLETINEKIRKRFKNPKLSNSFSAKVGRHASLAWCRALIISLALITPLQPVSSEESQAITPSFGLLENRRVLCVDLQSEFWSSSFEDPLESQMLEAKWRPVLSKIKNVLIFNKVVEGNLEIANSLLKSCYNFFRETASVTLPSDINLYFALPRLAPAGELLPGNEGVEVIDVSIPRKLLLWAYTLFHGHCGSISQVVKYMEENTKPKMKRGASTSSVVPSVQSGGTSEPEPAPKVVQVIIPDSLGGDSCGSTPAAPL.

TPR repeat units follow at residues 30-65, 81-116, and 118-150; these read LSQT…ITNS, FLAL…DAKD, and VLWN…SPNN. The disordered stretch occupies residues 315–361; it reads ERESGGSVKEKEPVFSEEHPQERRSTRLERLRNQKPEKEGLEFDNSK. TPR repeat units follow at residues 543–576, 602–637, 866–900, 955–988, 990–1009, 1011–1031, 1143–1183, 1226–1263, 1264–1297, 1306–1339, 1377–1412, and 1508–1541; these read ARYF…LGRE, IHEI…LAPL, INSP…EKNE, QCFF…DYQT, EQCV…SSRT, LVKL…PPDD, FESW…SQRV, VPFY…RQDW, SHAF…NPSA, ASRL…KDTA, EGVW…LAQG, and NSLR…SMSR. Residues 894-923 show a composition bias toward basic and acidic residues; it reads VHVEKNENNKTESKKDGSEEQVGYREKEQS. The interval 894 to 941 is disordered; the sequence is VHVEKNENNKTESKKDGSEEQVGYREKEQSEQQSKQIPEHTEEVAEEE. Residues 1813–1840 form a disordered region; the sequence is KMKRGASTSSVVPSVQSGGTSEPEPAPK. Over residues 1818-1832 the composition is skewed to polar residues; that stretch reads ASTSSVVPSVQSGGT.

In terms of assembly, component of the HIRA complex made of UBN1, UBN2, ASF1A, CABIN1 and HIRA. Expressed at low levels in seedlings.

Its subcellular location is the nucleus. May be required for replication-independent chromatin assembly. This chain is Calcineurin-binding protein 1, found in Arabidopsis thaliana (Mouse-ear cress).